The chain runs to 209 residues: Orotate phosphoribosyltransferase (209 aa).

Residues Arg96, Lys100, His102, and 122 to 130 (EDLISTGGS) contribute to the 5-phospho-alpha-D-ribose 1-diphosphate site. Ser126 is a binding site for orotate.

It belongs to the purine/pyrimidine phosphoribosyltransferase family. PyrE subfamily. In terms of assembly, homodimer. Mg(2+) serves as cofactor.

It carries out the reaction orotidine 5'-phosphate + diphosphate = orotate + 5-phospho-alpha-D-ribose 1-diphosphate. Its pathway is pyrimidine metabolism; UMP biosynthesis via de novo pathway; UMP from orotate: step 1/2. Functionally, catalyzes the transfer of a ribosyl phosphate group from 5-phosphoribose 1-diphosphate to orotate, leading to the formation of orotidine monophosphate (OMP). The chain is Orotate phosphoribosyltransferase from Streptococcus pyogenes serotype M1.